A 192-amino-acid chain; its full sequence is Orotate phosphoribosyltransferase (192 aa).

Residue Glu-116 to Ser-124 participates in 5-phospho-alpha-D-ribose 1-diphosphate binding. 2 residues coordinate orotate: Thr-120 and Arg-148.

It belongs to the purine/pyrimidine phosphoribosyltransferase family. PyrE subfamily. As to quaternary structure, homodimer. Requires Mg(2+) as cofactor.

The enzyme catalyses orotidine 5'-phosphate + diphosphate = orotate + 5-phospho-alpha-D-ribose 1-diphosphate. The protein operates within pyrimidine metabolism; UMP biosynthesis via de novo pathway; UMP from orotate: step 1/2. Its function is as follows. Catalyzes the transfer of a ribosyl phosphate group from 5-phosphoribose 1-diphosphate to orotate, leading to the formation of orotidine monophosphate (OMP). In Brucella anthropi (strain ATCC 49188 / DSM 6882 / CCUG 24695 / JCM 21032 / LMG 3331 / NBRC 15819 / NCTC 12168 / Alc 37) (Ochrobactrum anthropi), this protein is Orotate phosphoribosyltransferase.